A 445-amino-acid chain; its full sequence is MNANNTLDLTPHFALDGDQPFKDRRAMMPFRGAIPVAKEQLAQTWQEMINQTASPRKRLVYLHIPFCATHCTFCGFYQNRFNEDACAHYTDALIREIEMEADSVLHQSAPIHAVYFGGGTPSALSAHDLARIITTLREKLPLAPDCEITIEGRVLNFDAERIDACLDAGANRFSIGIQSFNSKIRKKMARTSDGPTAIAFMESLVKRDRAAVVCDLLFGLPGQDAQTWGEDLAIARDIGLDGVDLYALNVLSNTPLGKAVENGRTTVPSPAERRDLYLQGCDFMDDAGWRCISNSHWGRTTRERNLYNLLIKQGADCLAFGSGAGGSINGYSWMNERNLQTWHESVAAGKKPLMLIMRNAERNAQWRHTLQSGVETARVPLDELTPHAEKLAPLLAQWHQKGLSRDASTCLRLTNEGRFWASNILQSLNELIQVLNAPAIMREKP.

Residues 52–287 (TASPRKRLVY…LQGCDFMDDA (236 aa)) enclose the Radical SAM core domain. An S-adenosyl-L-methionine-binding site is contributed by Tyr61. Residues Cys67 and Cys71 each contribute to the [4Fe-4S] cluster site. S-adenosyl-L-methionine is bound at residue Phe73. Cys74 is a binding site for [4Fe-4S] cluster. Residues Gly118, 119–120 (GT), Glu151, Gln178, Arg190, and Asp215 contribute to the S-adenosyl-L-methionine site.

Belongs to the anaerobic coproporphyrinogen-III oxidase family. ChuW/HutW subfamily. The cofactor is [4Fe-4S] cluster.

The catalysed reaction is 2 reduced [flavodoxin] + heme b + 2 S-adenosyl-L-methionine = anaerobilin + 2 oxidized [flavodoxin] + Fe(2+) + 5'-deoxyadenosine + L-methionine + S-adenosyl-L-homocysteine. Its activity is regulated as follows. Inhibited by exposure to molecular oxygen. Functionally, involved in heme degradation and iron utilization under anaerobic conditions. Catalyzes a radical-mediated mechanism facilitating iron liberation and the production of the tetrapyrrole product anaerobilin. Can use heme, mesoheme and deuteroheme as substrates. The protein is Anaerobilin synthase of Escherichia coli O157:H7.